Consider the following 2034-residue polypeptide: Sperm vesicle fusion protein fer-1 (2034 aa).

Positions 1–80 are disordered; the sequence is MTVKEKLLKV…GGSDIELLPD (80 aa). Residues 1-1998 lie on the Cytoplasmic side of the membrane; the sequence is MTVKEKLLKV…CIKYFWHYYG (1998 aa). A compositionally biased stretch (acidic residues) spans 66 to 79; the sequence is ELSDDGGSDIELLP. C2 domains are found at residues 229–367, 954–1082, 1120–1246, and 1363–1484; these read RIDE…YLPT, DSED…PQWF, YKER…KSDH, and KKGK…ATGG. The segment at 1563 to 1619 is disordered; it reads QKAGKENFSDGSDQQNEDVSDGSWDEEDLEREKEKLKWEKHRSKGKPLKKVTTEKAE. Residues 1577–1591 are compositionally biased toward acidic residues; the sequence is QNEDVSDGSWDEEDL. Residues 1600-1611 are compositionally biased toward basic residues; that stretch reads WEKHRSKGKPLK. The region spanning 1684–1831 is the C2 5 domain; it reads EYGAIPAPFN…EGIGSPSDVG (148 aa). The segment at 1953–1972 is disordered; sequence QEPAGKKRSEPNHSPFLEKP. A helical membrane pass occupies residues 1999–2019; that stretch reads LQILLWLIIIVILILTIFVLL. Residues 2020 to 2034 are Extracellular-facing; the sequence is HTWPTILAEIIKAIF.

It belongs to the ferlin family. As to expression, exclusively expressed in the testis.

It is found in the membrane. Required for the fusion of the membranous organelles (MOs) with the plasma membrane, a process essential in spermiogenesis. In Caenorhabditis elegans, this protein is Sperm vesicle fusion protein fer-1 (fer-1).